A 219-amino-acid chain; its full sequence is GTP-binding nuclear protein GSP1/CNR1 (219 aa).

N-acetylserine is present on Ser2. Ser2 is subject to Phosphoserine. Residues 9 to 173 (EVPTFKLVLV…LWLARKLAGN (165 aa)) form the Small GTPase Ran-type domain. 20–27 (DGGTGKTT) lines the GTP pocket. The segment at 39-47 (KKYIATIGV) is switch-I. Residues Gly70, 124–127 (NKVD), and 152–154 (SAK) each bind GTP. Residues 70-86 (GQEKFGGLRDGYYINAQ) are switch-II.

The protein belongs to the small GTPase superfamily. Ran family. In terms of assembly, found in a nuclear export complex with RanGTP, exportin and pre-miRNA. Forms a complex with YRB1. Interacts with BUD5, CEX1, RRP12, SRM1, and DIS3/RRP44.

The protein resides in the nucleus. Functionally, GTP-binding protein involved in nucleocytoplasmic transport. Required for the import of protein into the nucleus and also for RNA export. Essential for cell viability. By analogy with Ras, Ran may be activated when GTP is exchanged for bound GDP by RCC1 and inactivated when GTP is hydrolyzed by Ran upon activation by RanGAP1. This chain is GTP-binding nuclear protein GSP1/CNR1 (GSP1), found in Saccharomyces cerevisiae (strain ATCC 204508 / S288c) (Baker's yeast).